A 160-amino-acid polypeptide reads, in one-letter code: MSSIPISTEGYDRLMKELERLKSERPAIIQAIKEAREEGDLKENAGYDAARERQGMLEARISYIESRMAQFNVINLDSLSGDKVMFGATVEIEDLDSGEAKRYTLLGPDEADYAQGTISVLSPVARALLGKEEGDEIVVDAPRGRISYEIISVAFEGARR.

Positions 11-38 form a coiled coil; sequence YDRLMKELERLKSERPAIIQAIKEAREE.

Belongs to the GreA/GreB family.

Necessary for efficient RNA polymerase transcription elongation past template-encoded arresting sites. The arresting sites in DNA have the property of trapping a certain fraction of elongating RNA polymerases that pass through, resulting in locked ternary complexes. Cleavage of the nascent transcript by cleavage factors such as GreA or GreB allows the resumption of elongation from the new 3'terminus. GreA releases sequences of 2 to 3 nucleotides. The chain is Transcription elongation factor GreA from Nitratidesulfovibrio vulgaris (strain DSM 19637 / Miyazaki F) (Desulfovibrio vulgaris).